The chain runs to 288 residues: MFASKLAVCSALALLAVAHAAPGGNDIQKITKAPNVPTKAEGDAASKASAPAIPPKPVNERFPHAVLFGGTCGGTIISPTWILTAGHCTLFTGGRYILAGTNNTDNPNAVTRHVKRQVIHPLFSVGPYWLDADDFNIKQVAARWDFLLAELSEPLPLDGKLMAAAKLDDQPSLPVGLNVGFGGYGTDHFGGTMRSEMHGMELAVQSDEVCSTLEQYNSKDMLCVKGRPPRFDSACNGDSGSGLVDETGRVIGVASWVENDAHSCFNGALVVFSRVASVRDWIKKVTNI.

Residues 1 to 20 form the signal peptide; that stretch reads MFASKLAVCSALALLAVAHA. Positions 21 to 287 constitute a Peptidase S1 domain; it reads APGGNDIQKI…VRDWIKKVTN (267 aa). A disordered region spans residues 27 to 56; the sequence is IQKITKAPNVPTKAEGDAASKASAPAIPPK. A disulfide bond links Cys72 and Cys88. Residues His87 and Asp145 each act as charge relay system in the active site. Cystine bridges form between Cys210/Cys223 and Cys235/Cys264. Residue Ser239 is the Charge relay system of the active site.

Belongs to the peptidase S1 family.

The sequence is that of Scolexin B from Heliothis virescens (Tobacco budworm moth).